The chain runs to 132 residues: Fatty acid-binding protein 9 (132 aa).

Residues S13, S14, S40, S42, S44, and S91 each carry the phosphoserine modification.

Belongs to the calycin superfamily. Fatty-acid binding protein (FABP) family. In terms of tissue distribution, testis.

Its subcellular location is the cytoplasm. In Mus musculus (Mouse), this protein is Fatty acid-binding protein 9 (Fabp9).